The primary structure comprises 412 residues: UPF0754 membrane protein MAE_37850 (412 aa).

The next 2 helical transmembrane spans lie at 3-23 (LPTL…GYFT) and 387-407 (IVNL…IILI).

It belongs to the UPF0754 family.

The protein resides in the cell inner membrane. The polypeptide is UPF0754 membrane protein MAE_37850 (Microcystis aeruginosa (strain NIES-843 / IAM M-2473)).